Reading from the N-terminus, the 87-residue chain is Large ribosomal subunit protein bL31B (87 aa).

It belongs to the bacterial ribosomal protein bL31 family. Type B subfamily. In terms of assembly, part of the 50S ribosomal subunit.

This Salinispora arenicola (strain CNS-205) protein is Large ribosomal subunit protein bL31B.